Here is a 273-residue protein sequence, read N- to C-terminus: ATP synthase subunit delta (273 aa).

The protein belongs to the ATPase delta chain family. As to quaternary structure, F-type ATPases have 2 components, F(1) - the catalytic core - and F(0) - the membrane proton channel. F(1) has five subunits: alpha(3), beta(3), gamma(1), delta(1), epsilon(1). F(0) has three main subunits: a(1), b(2) and c(10-14). The alpha and beta chains form an alternating ring which encloses part of the gamma chain. F(1) is attached to F(0) by a central stalk formed by the gamma and epsilon chains, while a peripheral stalk is formed by the delta and b chains.

It is found in the cell membrane. Functionally, f(1)F(0) ATP synthase produces ATP from ADP in the presence of a proton or sodium gradient. F-type ATPases consist of two structural domains, F(1) containing the extramembraneous catalytic core and F(0) containing the membrane proton channel, linked together by a central stalk and a peripheral stalk. During catalysis, ATP synthesis in the catalytic domain of F(1) is coupled via a rotary mechanism of the central stalk subunits to proton translocation. This protein is part of the stalk that links CF(0) to CF(1). It either transmits conformational changes from CF(0) to CF(1) or is implicated in proton conduction. The protein is ATP synthase subunit delta of Streptomyces avermitilis (strain ATCC 31267 / DSM 46492 / JCM 5070 / NBRC 14893 / NCIMB 12804 / NRRL 8165 / MA-4680).